The sequence spans 102 residues: MNGQNIRIRLKAFDHRILDTSTREIVNTAKRTGAQVRGPIPLPTRIEKFTVNRSPHVDKKSREQFEMRTHKRLLDIVDPTPQTVDALMKLDLAAGVDVEIKL.

This sequence belongs to the universal ribosomal protein uS10 family. In terms of assembly, part of the 30S ribosomal subunit.

Functionally, involved in the binding of tRNA to the ribosomes. This Rhodopseudomonas palustris (strain HaA2) protein is Small ribosomal subunit protein uS10.